The sequence spans 837 residues: Histone acetyltransferase KAT2A (837 aa).

Positions 1–99 are disordered; it reads MAEPSQAPTP…RKAQVRGLPR (99 aa). Position 2 is an N-acetylalanine (alanine 2). Positions 7-51 are enriched in pro residues; it reads APTPAPAAQPRPLQSPAPAPTPTPAPSPASAPIPTPTPAPAPAPA. Positions 58 to 74 are enriched in gly residues; it reads TGTGGPGVGSGGAGSGG. Residues 75-87 show a composition bias toward low complexity; it reads DPARPGLSQQQRA. Residues 88–99 are compositionally biased toward basic residues; it reads SQRKAQVRGLPR. The residue at position 307 (serine 307) is a Phosphoserine. Residues 407 to 434 form a disordered region; sequence FSPSMGGGSNSSLSLDSAGAEPMPGEKR. A compositionally biased stretch (low complexity) spans 416–425; that stretch reads NSSLSLDSAG. The N-acetyltransferase domain maps to 503-656; the sequence is VIGNSLTPKA…GATLMECELN (154 aa). The residue at position 549 (lysine 549) is an N6-acetyllysine. The active-site Proton donor/acceptor is the glutamate 575. Acetyl-CoA is bound by residues 579-581, 586-592, and tyrosine 617; these read CAV and QVKGYGT. Succinyl-CoA contacts are provided by residues 579-581, 586-592, and tyrosine 617; these read CAV and QVKGYGT. The tract at residues 639–648 is loop 3; it reads LGYIKDYEGA. Residue lysine 728 forms a Glycyl lysine isopeptide (Lys-Gly) (interchain with G-Cter in SUMO2) linkage. Residues 728–832 enclose the Bromo domain; sequence KDPDQLYTTL…KFFYFKLKEG (105 aa). Threonine 735 carries the post-translational modification Phosphothreonine. Residues lysine 759 and lysine 791 each participate in a glycyl lysine isopeptide (Lys-Gly) (interchain with G-Cter in SUMO2) cross-link.

It belongs to the acetyltransferase family. GCN5 subfamily. As to quaternary structure, homooligomer; may form a tetramer of homodimers. Interacts with EP300, CREBBP and ADA2. Component of the TFTC-HAT complex, at least composed of TAF5L, TAF6L, TAF3, TADA3L, SUPT3H/SPT3, TAF2/TAFII150, TAF4/TAFII135, TAF5/TAFII100, KAT2A/GCN5L2, TAF10 and TRRAP. Component of the STAGA transcription coactivator-HAT complex, at least composed of SUPT3H, KAT2A, SUPT7L, TAF5L, TAF6L, TADA3L, TAD1L, TAF10, TAF12, TRRAP and TAF9. The STAGA core complex is associated with a subcomplex required for histone deubiquitination composed of ATXN7L3, ENY2 and USP22. Component of the ADA2A-containing complex (ATAC), composed of KAT14, KAT2A, TADA2L, TADA3L, ZZ3, MBIP, WDR5, YEATS2, CCDC101 and DR1. In the complex, it probably interacts directly with KAT14, MBIP and WDR5. Interacts with PML. Interacts with CEBPB. Interacts with TACC1, TACC2 and TACC3. Interacts with RELA. Interacts with NFATC2. Interacts with TBX5. Interacts with PLK4. Associates with the 2-oxoglutarate dehydrogenase complex. Interacts with XPC; leading to KAT2A recruitment to promoters and subsequent acetylation of histones. Interacts with ERCC3/XPB; leading to KAT2A recruitment to promoters and subsequent acetylation of histones. Interacts with ISL1. Interactions of ISL1 with MLIP1 or KAT2A may be mutually exclusive. (Microbial infection) Interacts with and acetylates HIV-1 Tat. In terms of processing, acetylated at Lys-549, inhibiting the protein acetyltransferase activity. Deacetylation at Lys-549 by SIRT6 promotes phosphorylation at Ser-307 and Thr-735 and subsequent activation of the protein acetyltransferase activity, leading to acetylation and inactivation of PPARGC1A. As to expression, expressed in all tissues tested.

Its subcellular location is the nucleus. It localises to the chromosome. It is found in the cytoplasm. The protein localises to the cytoskeleton. The protein resides in the microtubule organizing center. Its subcellular location is the centrosome. The enzyme catalyses L-lysyl-[histone] + acetyl-CoA = N(6)-acetyl-L-lysyl-[histone] + CoA + H(+). It catalyses the reaction L-lysyl-[protein] + acetyl-CoA = N(6)-acetyl-L-lysyl-[protein] + CoA + H(+). It carries out the reaction succinyl-CoA + L-lysyl-[protein] = N(6)-succinyl-L-lysyl-[protein] + CoA + H(+). The catalysed reaction is glutaryl-CoA + L-lysyl-[protein] = N(6)-glutaryl-L-lysyl-[protein] + CoA + H(+). Its function is as follows. Protein lysine acyltransferase that can act as a acetyltransferase, glutaryltransferase, succinyltransferase or malonyltransferase, depending on the context. Acts as a histone lysine succinyltransferase: catalyzes succinylation of histone H3 on 'Lys-79' (H3K79succ), with a maximum frequency around the transcription start sites of genes. Succinylation of histones gives a specific tag for epigenetic transcription activation. Association with the 2-oxoglutarate dehydrogenase complex, which provides succinyl-CoA, is required for histone succinylation. In different complexes, functions either as an acetyltransferase (HAT) or as a succinyltransferase: in the SAGA and ATAC complexes, acts as a histone acetyltransferase. Has significant histone acetyltransferase activity with core histones, but not with nucleosome core particles. Has a a strong preference for acetylation of H3 at 'Lys-9' (H3K9ac). Acetylation of histones gives a specific tag for epigenetic transcription activation. Recruited by the XPC complex at promoters, where it specifically mediates acetylation of histone variant H2A.Z.1/H2A.Z, thereby promoting expression of target genes. Involved in long-term memory consolidation and synaptic plasticity: acts by promoting expression of a hippocampal gene expression network linked to neuroactive receptor signaling. Acts as a positive regulator of T-cell activation: upon TCR stimulation, recruited to the IL2 promoter following interaction with NFATC2 and catalyzes acetylation of histone H3 at 'Lys-9' (H3K9ac), leading to promote IL2 expression. Required for growth and differentiation of craniofacial cartilage and bone by regulating acetylation of histone H3 at 'Lys-9' (H3K9ac). Regulates embryonic stem cell (ESC) pluripotency and differentiation. Also acetylates non-histone proteins, such as CEBPB, MRE11, PPARGC1A, PLK4 and TBX5. Involved in heart and limb development by mediating acetylation of TBX5, acetylation regulating nucleocytoplasmic shuttling of TBX5. Acts as a negative regulator of centrosome amplification by mediating acetylation of PLK4. Acts as a negative regulator of gluconeogenesis by mediating acetylation and subsequent inactivation of PPARGC1A. Also acts as a histone glutaryltransferase: catalyzes glutarylation of histone H4 on 'Lys-91' (H4K91glu), a mark that destabilizes nucleosomes by promoting dissociation of the H2A-H2B dimers from nucleosomes. Functionally, (Microbial infection) In case of HIV-1 infection, it is recruited by the viral protein Tat. Regulates Tat's transactivating activity and may help inducing chromatin remodeling of proviral genes. The sequence is that of Histone acetyltransferase KAT2A from Homo sapiens (Human).